The primary structure comprises 627 residues: Spindle assembly abnormal protein 6 homolog (627 aa).

The PISA domain maps to 39 to 91 (VHRKDLVVRLTDDTDLYFLYNLIISEEDFQSLKVQQGLLIDFTSFPQKFIDLL). A coiled-coil region spans residues 153–473 (LASCLSSVKE…SREVLKTNEN (321 aa)). Disordered regions lie at residues 187-257 (QTLS…LQTK) and 561-586 (EVSPAAFSQPANKENSEPVGLDSKYF). Residues 191–201 (EKSRELDKLRS) are compositionally biased toward basic and acidic residues. The span at 202–213 (EWTSQTTSLSSR) shows a compositional bias: polar residues. Positions 214–226 (HMQDLTAEREKAL) are enriched in basic and acidic residues. The segment covering 229 to 238 (QSRLQQQNEQ) has biased composition (low complexity).

In terms of assembly, nine homodimers form a cartwheel structure with an internal diameter of 23 nM and radial spokes connecting to the microtubule triplets.

It localises to the cytoplasm. It is found in the cytoskeleton. The protein localises to the microtubule organizing center. Its subcellular location is the centrosome. Its function is as follows. Central scaffolding component of the centrioles ensuring their 9-fold symmetry. Required for centrosome biogenesis and duplication: required both for mother-centriole-dependent centriole duplication and deuterosome-dependent centriole amplification in multiciliated cells. This chain is Spindle assembly abnormal protein 6 homolog (sass6), found in Danio rerio (Zebrafish).